Consider the following 188-residue polypeptide: dTTP/UTP pyrophosphatase (188 aa).

Residue Asp-67 is the Proton acceptor of the active site.

It belongs to the Maf family. YhdE subfamily. A divalent metal cation is required as a cofactor.

It localises to the cytoplasm. The enzyme catalyses dTTP + H2O = dTMP + diphosphate + H(+). The catalysed reaction is UTP + H2O = UMP + diphosphate + H(+). Its function is as follows. Nucleoside triphosphate pyrophosphatase that hydrolyzes dTTP and UTP. May have a dual role in cell division arrest and in preventing the incorporation of modified nucleotides into cellular nucleic acids. In Thermococcus kodakarensis (strain ATCC BAA-918 / JCM 12380 / KOD1) (Pyrococcus kodakaraensis (strain KOD1)), this protein is dTTP/UTP pyrophosphatase.